Here is a 229-residue protein sequence, read N- to C-terminus: Synaptogyrin-3 (229 aa).

N-acetylmethionine is present on M1. The 153-residue stretch at 20-172 (FARRPQTLLR…LTVKALQRFR (153 aa)) folds into the MARVEL domain. 4 consecutive transmembrane segments (helical) span residues 30–50 (VVSWVFSIAVFGPIVNEGYVN), 70–90 (FGVVLGLGAFIACVAFLLLDV), 105–125 (VLLDLGFSGVWSFLWFVGFCF), and 148–168 (AAIAFSFFSILSWVALTVKAL). Polar residues predominate over residues 209-223 (QSPPFTETLDTSSKG). Residues 209–229 (QSPPFTETLDTSSKGYQVPAY) form a disordered region.

Belongs to the synaptogyrin family. In terms of assembly, interacts (via N-terminus) with SLC6A3 (via N-terminus). May interact with VMAT2. As to expression, specifically expressed in brain. Found in the brain across the dorsal and ventral corpus striatum as well as in the cortex.

It localises to the cytoplasmic vesicle. Its subcellular location is the secretory vesicle. It is found in the synaptic vesicle membrane. The protein resides in the synapse. May play a role in regulated exocytosis. May indirectly regulate the activity of the plasma membrane dopamine transporter SLC6A3 and thereby regulate dopamine transport back from the synaptic cleft into the presynaptic terminal. This Mus musculus (Mouse) protein is Synaptogyrin-3.